The primary structure comprises 965 residues: MSSFHKNSSYMEDPDYPGYSGSQNHTQNYLRTQDDLEFPGCLDNPGFHHPRRNPYSSDSRTNPDYHHSLAEPDYPGSPSDADYQNTRCHPRSAHPRTRPDYEPDYEPDYNDFQSESYHPDLSMEPDYPGSHGHPGFAGVRSSVNSTGPRTNLGYLDLEEPDYPGAQGNSYHSGPRSHSNLPGSRRNAGYAGSRINSYPDSLGEPDYPGAENQPNSPDFYGKPDYPGAEEGDVYSPSKTLGVIGRSRGSFGILGREDGDYPEGIEMASLGMAGDPRNGYVNPAYMRGSSPVCPDRNLLLCARDWNTSPQGQKLIASLVPMTSRDRIKTIRNQPRTMQEKRELRKIVDKEKNKQSHGTFEANCCAQCLSSLSLAYRRTKSSLSELLNYISLWQKRFKVIGGKFGTSVLSYFSFLRWLLKFNIFSFVMNFSFIIIPQFTVGEKNTLQFTGLEFFTGAGYFRETVMYYGFYTNSTIRHRMGGASYNMQLAYIFTIGACLVICFFSLLFSMAKYFRNNFINPHIYSRGIAKLIFCWDFTVTHEKAVKLKQKNLSTEIRENLSEIRQENDRLTLNQKLTRFSVHVAAWLVSTGITAACCVAVYYLAEYNSEFLKTHKNPGAVLLLPFVVSCINLAVPRFYSMFRLVERYEIPRQEVYVLLIRNIFLKISIVGILCYYWLNIVALSGEECWETLIGQDIYRLLLMDFVFSLADSLLGEFLRRLIGMKFITSLSLQEFDIARNVLELIYAQTLAWLGIFFCPLLPFIQMITLFIMFYVKNVSLMMNFQPPSKAWRASQMITFFIFLLFFPSFTGVLCTLAITIWRLKPSADCGPFRGLPSFIQSIYSWIDTLSHRPGYLWVVWIYQNLIGSVHFFFILTLIVLIITYLYWQITEGRKVMIRLLHEQIINEGKDKMFLIEKLTKLQDIERRANPSTLVLERREVEQQSPLHLEELDAAPDLRLRRSMQEENAIA.

Polar residues-rich tracts occupy residues 1 to 10 (MSSFHKNSSY) and 20 to 31 (SGSQNHTQNYLR). The tract at residues 1–235 (MSSFHKNSSY…GAEEGDVYSP (235 aa)) is disordered. The Extracellular segment spans residues 1-417 (MSSFHKNSSY…YFSFLRWLLK (417 aa)). Residues 61 to 70 (TNPDYHHSLA) are compositionally biased toward basic and acidic residues. The span at 166 to 181 (QGNSYHSGPRSHSNLP) shows a compositional bias: polar residues. S248 is subject to Phosphoserine. The chain crosses the membrane as a helical span at residues 418-438 (FNIFSFVMNFSFIIIPQFTVG). The Cytoplasmic portion of the chain corresponds to 439-444 (EKNTLQ). A helical transmembrane segment spans residues 445–467 (FTGLEFFTGAGYFRETVMYYGFY). Topologically, residues 468-484 (TNSTIRHRMGGASYNMQ) are extracellular. A helical membrane pass occupies residues 485-505 (LAYIFTIGACLVICFFSLLFS). At 506-578 (MAKYFRNNFI…NQKLTRFSVH (73 aa)) the chain is on the cytoplasmic side. A helical transmembrane segment spans residues 579-599 (VAAWLVSTGITAACCVAVYYL). The Extracellular segment spans residues 600–613 (AEYNSEFLKTHKNP). A helical transmembrane segment spans residues 614 to 634 (GAVLLLPFVVSCINLAVPRFY). Topologically, residues 635 to 657 (SMFRLVERYEIPRQEVYVLLIRN) are cytoplasmic. A helical membrane pass occupies residues 658-678 (IFLKISIVGILCYYWLNIVAL). Topologically, residues 679-691 (SGEECWETLIGQD) are extracellular. Residues 692 to 712 (IYRLLLMDFVFSLADSLLGEF) traverse the membrane as a helical segment. The Cytoplasmic portion of the chain corresponds to 713–747 (LRRLIGMKFITSLSLQEFDIARNVLELIYAQTLAW). The chain crosses the membrane as a helical span at residues 748–768 (LGIFFCPLLPFIQMITLFIMF). The Extracellular segment spans residues 769 to 794 (YVKNVSLMMNFQPPSKAWRASQMITF). The chain crosses the membrane as a helical span at residues 795–815 (FIFLLFFPSFTGVLCTLAITI). Residues 816–859 (WRLKPSADCGPFRGLPSFIQSIYSWIDTLSHRPGYLWVVWIYQN) lie on the Cytoplasmic side of the membrane. Residues 860 to 880 (LIGSVHFFFILTLIVLIITYL) form a helical membrane-spanning segment. Over 881–965 (YWQITEGRKV…RSMQEENAIA (85 aa)) the chain is Extracellular.

Belongs to the TMC family.

It is found in the membrane. Probable component of an ion channel. Molecular function hasn't been characterized yet. This is Transmembrane channel-like protein 5 from Rattus norvegicus (Rat).